Here is a 200-residue protein sequence, read N- to C-terminus: Imidazole glycerol phosphate synthase subunit HisH (200 aa).

The region spanning Lys2–Arg200 is the Glutamine amidotransferase type-1 domain. The active-site Nucleophile is the Cys79. Active-site residues include His179 and Glu181.

As to quaternary structure, heterodimer of HisH and HisF.

It is found in the cytoplasm. The catalysed reaction is 5-[(5-phospho-1-deoxy-D-ribulos-1-ylimino)methylamino]-1-(5-phospho-beta-D-ribosyl)imidazole-4-carboxamide + L-glutamine = D-erythro-1-(imidazol-4-yl)glycerol 3-phosphate + 5-amino-1-(5-phospho-beta-D-ribosyl)imidazole-4-carboxamide + L-glutamate + H(+). It catalyses the reaction L-glutamine + H2O = L-glutamate + NH4(+). It functions in the pathway amino-acid biosynthesis; L-histidine biosynthesis; L-histidine from 5-phospho-alpha-D-ribose 1-diphosphate: step 5/9. Its function is as follows. IGPS catalyzes the conversion of PRFAR and glutamine to IGP, AICAR and glutamate. The HisH subunit catalyzes the hydrolysis of glutamine to glutamate and ammonia as part of the synthesis of IGP and AICAR. The resulting ammonia molecule is channeled to the active site of HisF. The protein is Imidazole glycerol phosphate synthase subunit HisH of Methanopyrus kandleri (strain AV19 / DSM 6324 / JCM 9639 / NBRC 100938).